We begin with the raw amino-acid sequence, 657 residues long: Tyramine beta-hydroxylase (657 aa).

Residues 77-97 (VALLFLLVAYCGGVVHAGEIV) form a helical membrane-spanning segment. In terms of domain architecture, DOMON spans 103–214 (TNVTVKWHTD…GTTQFYIAAS (112 aa)). 2 N-linked (GlcNAc...) asparagine glycosylation sites follow: Asn104 and Asn143. Tyr278 is a catalytic residue. Cystine bridges form between Cys280-Cys330 and Cys319-Cys342. 2 residues coordinate Cu(2+): His312 and His313. Cu(2+) contacts are provided by His380, His458, His460, and Met533. Intrachain disulfides connect Cys437-Cys549, Cys441-Cys606, and Cys512-Cys534. Residue His458 is part of the active site. A glycan (N-linked (GlcNAc...) asparagine) is linked at Asn555.

This sequence belongs to the copper type II ascorbate-dependent monooxygenase family. Requires Cu(2+) as cofactor. Present in synaptic regions of RIC interneurons. Present in gonadal sheath cells of hermaphrodites (at protein level).

The protein localises to the membrane. The catalysed reaction is tyramine + L-ascorbate + O2 = (R)-octopamine + L-dehydroascorbate + H2O. Functionally, required for the conversion of tyramine to octopamine, a precursor of octapamine but probably itself a neurotransmitter. Involved in the regulation of egg laying, which is inhibited by tyramine. Due to its involvement in octopamine biosynthesis, also required for crtc-1-dependent regulation of AMPK-mediated longevity. In Caenorhabditis elegans, this protein is Tyramine beta-hydroxylase.